We begin with the raw amino-acid sequence, 257 residues long: Snake venom serine protease 3 (257 aa).

An N-terminal signal peptide occupies residues methionine 1–alanine 18. Residues glutamine 19–leucine 24 constitute a propeptide that is removed on maturation. In terms of domain architecture, Peptidase S1 spans valine 25 to alanine 248. 6 disulfide bridges follow: cysteine 31–cysteine 163, cysteine 50–cysteine 66, cysteine 98–cysteine 255, cysteine 142–cysteine 209, cysteine 174–cysteine 188, and cysteine 199–cysteine 224. Residue asparagine 44 is glycosylated (N-linked (GlcNAc...) asparagine). Histidine 65 functions as the Charge relay system in the catalytic mechanism. Asparagine 103 carries an N-linked (GlcNAc...) asparagine glycan. Aspartate 110 serves as the catalytic Charge relay system. N-linked (GlcNAc...) asparagine glycans are attached at residues asparagine 117 and asparagine 154. Serine 203 (charge relay system) is an active-site residue. Asparagine 250 carries N-linked (GlcNAc...) asparagine glycosylation.

The protein belongs to the peptidase S1 family. Snake venom subfamily. As to quaternary structure, monomer. As to expression, expressed by the venom gland.

Its subcellular location is the secreted. Functionally, snake venom serine protease that may act in the hemostasis system of the prey. This is Snake venom serine protease 3 (TLF3) from Protobothrops flavoviridis (Habu).